A 492-amino-acid polypeptide reads, in one-letter code: Fibroblast growth factor receptor substrate 3 (492 aa).

The N-myristoyl glycine moiety is linked to residue Gly2. One can recognise an IRS-type PTB domain in the interval 13 to 115 (VPHNHPTKFK…QCNSINVTEE (103 aa)). 4 disordered regions span residues 122 to 230 (SSHP…SDQR), 328 to 414 (LPPV…PPRQ), 426 to 454 (GTAR…SSDS), and 469 to 492 (LQRA…DLPL). Polar residues predominate over residues 371-382 (QKPTSTRASARS).

In terms of assembly, binds NGFR, GRB2, PTPN11 and ERK2. Binds FGFR1 and NTRK1. In terms of processing, phosphorylated on tyrosine residues upon stimulation by BFGF or NGFB. Phosphorylated by ULK2 in vitro.

The protein localises to the membrane. Its function is as follows. Adapter protein that links FGF and NGF receptors to downstream signaling pathways. Involved in the activation of MAP kinases. Down-regulates ERK2 signaling by interfering with the phosphorylation and nuclear translocation of ERK2. This Mus musculus (Mouse) protein is Fibroblast growth factor receptor substrate 3 (Frs3).